A 342-amino-acid polypeptide reads, in one-letter code: P21 prophage-derived major head protein (342 aa).

The protein belongs to the lambda phage major capsid protein family.

The polypeptide is P21 prophage-derived major head protein (Escherichia coli O6:H1 (strain CFT073 / ATCC 700928 / UPEC)).